The chain runs to 315 residues: Transaldolase (315 aa).

Lys125 (schiff-base intermediate with substrate) is an active-site residue.

It belongs to the transaldolase family. Type 1 subfamily. Homodimer.

It localises to the cytoplasm. It carries out the reaction D-sedoheptulose 7-phosphate + D-glyceraldehyde 3-phosphate = D-erythrose 4-phosphate + beta-D-fructose 6-phosphate. It participates in carbohydrate degradation; pentose phosphate pathway; D-glyceraldehyde 3-phosphate and beta-D-fructose 6-phosphate from D-ribose 5-phosphate and D-xylulose 5-phosphate (non-oxidative stage): step 2/3. Functionally, transaldolase is important for the balance of metabolites in the pentose-phosphate pathway. This Polaromonas naphthalenivorans (strain CJ2) protein is Transaldolase.